Here is a 345-residue protein sequence, read N- to C-terminus: D-fructose 1,6-bisphosphatase class 2/sedoheptulose 1,7-bisphosphatase (345 aa).

Mn(2+) contacts are provided by aspartate 33, glutamate 57, aspartate 97, and glutamate 100. Substrate contacts are provided by residues 100–102 (EGT), tyrosine 131, 176–178 (RDR), and 198–200 (DGD). Glutamate 225 contacts Mn(2+).

Belongs to the FBPase class 2 family. Homotetramer. The cofactor is Mn(2+).

It carries out the reaction beta-D-fructose 1,6-bisphosphate + H2O = beta-D-fructose 6-phosphate + phosphate. The catalysed reaction is D-sedoheptulose 1,7-bisphosphate + H2O = D-sedoheptulose 7-phosphate + phosphate. It functions in the pathway carbohydrate biosynthesis; Calvin cycle. Its function is as follows. Catalyzes the hydrolysis of fructose 1,6-bisphosphate (Fru 1,6-P2) and sedoheptulose 1,7-bisphosphate (Sed 1,7-P2) to fructose 6-phosphate and sedoheptulose 7-phosphate, respectively. The polypeptide is D-fructose 1,6-bisphosphatase class 2/sedoheptulose 1,7-bisphosphatase (Nostoc sp. (strain PCC 7120 / SAG 25.82 / UTEX 2576)).